A 422-amino-acid chain; its full sequence is UDP-N-acetylglucosamine 1-carboxyvinyltransferase (422 aa).

22-23 (KN) lines the phosphoenolpyruvate pocket. Position 92 (Arg-92) interacts with UDP-N-acetyl-alpha-D-glucosamine. Residue Cys-116 is the Proton donor of the active site. Position 116 is a 2-(S-cysteinyl)pyruvic acid O-phosphothioketal (Cys-116). Residues 121-125 (RPVDQ), Asp-307, and Ile-329 contribute to the UDP-N-acetyl-alpha-D-glucosamine site.

This sequence belongs to the EPSP synthase family. MurA subfamily.

It localises to the cytoplasm. The catalysed reaction is phosphoenolpyruvate + UDP-N-acetyl-alpha-D-glucosamine = UDP-N-acetyl-3-O-(1-carboxyvinyl)-alpha-D-glucosamine + phosphate. Its pathway is cell wall biogenesis; peptidoglycan biosynthesis. Cell wall formation. Adds enolpyruvyl to UDP-N-acetylglucosamine. The protein is UDP-N-acetylglucosamine 1-carboxyvinyltransferase of Psychrobacter arcticus (strain DSM 17307 / VKM B-2377 / 273-4).